Here is a 106-residue protein sequence, read N- to C-terminus: Large ribosomal subunit protein uL24 (106 aa).

This sequence belongs to the universal ribosomal protein uL24 family. As to quaternary structure, part of the 50S ribosomal subunit.

Its function is as follows. One of two assembly initiator proteins, it binds directly to the 5'-end of the 23S rRNA, where it nucleates assembly of the 50S subunit. In terms of biological role, one of the proteins that surrounds the polypeptide exit tunnel on the outside of the subunit. This chain is Large ribosomal subunit protein uL24, found in Porphyromonas gingivalis (strain ATCC 33277 / DSM 20709 / CIP 103683 / JCM 12257 / NCTC 11834 / 2561).